A 156-amino-acid chain; its full sequence is Small ribosomal subunit protein uS7 (156 aa).

This sequence belongs to the universal ribosomal protein uS7 family. As to quaternary structure, part of the 30S ribosomal subunit. Contacts proteins S9 and S11.

In terms of biological role, one of the primary rRNA binding proteins, it binds directly to 16S rRNA where it nucleates assembly of the head domain of the 30S subunit. Is located at the subunit interface close to the decoding center, probably blocks exit of the E-site tRNA. The protein is Small ribosomal subunit protein uS7 of Desulfatibacillum aliphaticivorans.